A 480-amino-acid chain; its full sequence is Glycogen synthase (480 aa).

Lys15 contributes to the ADP-alpha-D-glucose binding site.

The protein belongs to the glycosyltransferase 1 family. Bacterial/plant glycogen synthase subfamily.

The catalysed reaction is [(1-&gt;4)-alpha-D-glucosyl](n) + ADP-alpha-D-glucose = [(1-&gt;4)-alpha-D-glucosyl](n+1) + ADP + H(+). It participates in glycan biosynthesis; glycogen biosynthesis. Functionally, synthesizes alpha-1,4-glucan chains using ADP-glucose. In Granulibacter bethesdensis (strain ATCC BAA-1260 / CGDNIH1), this protein is Glycogen synthase.